We begin with the raw amino-acid sequence, 515 residues long: Bifunctional solanapyrone synthase (515 aa).

Positions 1-25 are cleaved as a signal peptide; that stretch reads MRLIILNLLSLGITPSVVGHSGPHR. N-linked (GlcNAc...) asparagine glycosylation occurs at Asn66. In terms of domain architecture, FAD-binding PCMH-type spans 91-261; sequence APKNPACIYT…THIVQRTYPL (171 aa). A Pros-8alpha-FAD histidine modification is found at His128. N-linked (GlcNAc...) asparagine glycosylation is found at Asn274 and Asn355.

This sequence belongs to the oxygen-dependent FAD-linked oxidoreductase family. FAD is required as a cofactor.

The enzyme catalyses prosolanapyrone II + O2 = prosolanapyrone III + H2O2. It catalyses the reaction prosolanapyrone III = (-)-solanapyrone A. It carries out the reaction prosolanapyrone III = solanapyrone D. Its pathway is phytotoxin biosynthesis. In terms of biological role, bifunctional solanapyrone synthase; part of the gene cluster that mediates the biosynthesis of the phytotoxin solanapyrone, a causal agent of early blight disease of potato and tomato. The prosolanapyrone synthase sol1 is a polyketide synthase that produces the octaketide desmethylprosolanapyrone I via sequential condensations of 7 malonyl-CoA units with one acetyl-CoA unit, and one methylation step. The octaketide backbone is further methylated by the sol2 O-methyltransferase to yield prosolanapyrone I. Prosolanapyrone I is hydroxylated to prosolanapyrone II by the cytochrome P450 monooxygenase sol6. The solanapyrone synthase sol5 then catalyzes the oxidation of prosolanapyrone II and the subsequent Diels Alder cycloisomerization of the product prosolanapyrone III to solanapyrones A and D. Solanapyrones A and D are then converted into solanapyrones B and E, respectively, by the sol3 dehydrogenase. This is Bifunctional solanapyrone synthase (sol5) from Alternaria solani.